The sequence spans 799 residues: ATP-dependent DNA helicase Hel308 (799 aa).

ATP contacts are provided by residues glutamine 29 and 47-54 (IPTASGKT). The 167-residue stretch at 34–200 (EAGVTEGENL…WLDAGLVDSD (167 aa)) folds into the Helicase ATP-binding domain. The short motif at 145-148 (DEVH) is the DEAH box element. The 202-residue stretch at 234–435 (QTAAIVRDTL…EPALRTHILA (202 aa)) folds into the Helicase C-terminal domain. Disordered regions lie at residues 522-566 (RGAS…DRDP) and 750-799 (NVLE…LGDF). Acidic residues predominate over residues 553–566 (LAEDADESDADRDP).

The protein belongs to the helicase family. Hel308 subfamily. Monomer.

It carries out the reaction Couples ATP hydrolysis with the unwinding of duplex DNA by translocating in the 3'-5' direction.. It catalyses the reaction ATP + H2O = ADP + phosphate + H(+). In terms of biological role, DNA-dependent ATPase and 3'-5' DNA helicase that may be involved in repair of stalled replication forks. In Haloarcula marismortui (strain ATCC 43049 / DSM 3752 / JCM 8966 / VKM B-1809) (Halobacterium marismortui), this protein is ATP-dependent DNA helicase Hel308.